The chain runs to 319 residues: NADH-quinone oxidoreductase subunit H 1 (319 aa).

The next 8 membrane-spanning stretches (helical) occupy residues 1–21, 74–94, 107–127, 147–167, 179–199, 238–258, 262–282, and 293–313; these read MIGLIITATISVTLIMVLLVV, FAYILAPAVAATPVLAGFGVI, VGVLFLIGMLGLTAYAVVLGA, LAYEVFLGLSLMGAVMLAGSL, VWFVVLQPLGAALFCIAGVAA, VLLVSALAVTLFFGGWLGPWL, IWFGLKTGVIAVVFVWLRATL, and FAWKIALPLSLANLLLTGIVV.

Belongs to the complex I subunit 1 family. In terms of assembly, NDH-1 is composed of 14 different subunits. Subunits NuoA, H, J, K, L, M, N constitute the membrane sector of the complex.

It is found in the cell inner membrane. It carries out the reaction a quinone + NADH + 5 H(+)(in) = a quinol + NAD(+) + 4 H(+)(out). In terms of biological role, NDH-1 shuttles electrons from NADH, via FMN and iron-sulfur (Fe-S) centers, to quinones in the respiratory chain. The immediate electron acceptor for the enzyme in this species is believed to be ubiquinone. Couples the redox reaction to proton translocation (for every two electrons transferred, four hydrogen ions are translocated across the cytoplasmic membrane), and thus conserves the redox energy in a proton gradient. This subunit may bind ubiquinone. This chain is NADH-quinone oxidoreductase subunit H 1, found in Rhodopseudomonas palustris (strain BisB5).